The sequence spans 334 residues: Phosphate acyltransferase (334 aa).

It belongs to the PlsX family. Homodimer. Probably interacts with PlsY.

It localises to the cytoplasm. The catalysed reaction is a fatty acyl-[ACP] + phosphate = an acyl phosphate + holo-[ACP]. Its pathway is lipid metabolism; phospholipid metabolism. Functionally, catalyzes the reversible formation of acyl-phosphate (acyl-PO(4)) from acyl-[acyl-carrier-protein] (acyl-ACP). This enzyme utilizes acyl-ACP as fatty acyl donor, but not acyl-CoA. This is Phosphate acyltransferase from Halothermothrix orenii (strain H 168 / OCM 544 / DSM 9562).